The primary structure comprises 1169 residues: ATP-dependent helicase/deoxyribonuclease subunit B (1169 aa).

Residues 1-285 (MEIQFLAGRS…TIFERNHRHL (285 aa)) form the UvrD-like helicase ATP-binding domain. ATP is bound at residue 8–15 (GRSGSGKT). Residues 280 to 586 (RNHRHLYTPD…KFALIPPSLD (307 aa)) enclose the UvrD-like helicase C-terminal domain. The [4Fe-4S] cluster site is built by C801, C1121, C1124, and C1130.

It belongs to the helicase family. AddB/RexB type 1 subfamily. Heterodimer of AddA and AddB. It depends on Mg(2+) as a cofactor. [4Fe-4S] cluster is required as a cofactor.

Its function is as follows. The heterodimer acts as both an ATP-dependent DNA helicase and an ATP-dependent, dual-direction single-stranded exonuclease. Recognizes the chi site generating a DNA molecule suitable for the initiation of homologous recombination. The AddB subunit has 5' -&gt; 3' nuclease activity but not helicase activity. This chain is ATP-dependent helicase/deoxyribonuclease subunit B, found in Bacillus pumilus (strain SAFR-032).